The sequence spans 191 residues: uncharacterized protein (191 aa).

The next 4 helical transmembrane spans lie at 12–32 (FAFL…FFTL), 48–68 (LVAL…LTLF), 92–112 (YISV…LLSL), and 168–188 (IFCL…SCAF).

The protein localises to the membrane. This is an uncharacterized protein from Saccharomyces cerevisiae (strain ATCC 204508 / S288c) (Baker's yeast).